Reading from the N-terminus, the 87-residue chain is Kappa 1b-bungarotoxin (87 aa).

Residues 1 to 21 (MKTLLLTLVVVTIVCLDLGYT) form the signal peptide. Cystine bridges form between Cys-24/Cys-42, Cys-35/Cys-63, Cys-48/Cys-52, Cys-67/Cys-79, and Cys-80/Cys-85.

The protein belongs to the three-finger toxin family. Long-chain subfamily. Kappa-neurotoxin sub-subfamily. As to quaternary structure, homo- and heterodimer; non-covalently linked. In terms of tissue distribution, expressed by the venom gland.

It is found in the secreted. Its function is as follows. Postsynaptic neurotoxin that binds and inhibits neuronal nicotinic acetylcholine receptors (nAChR) with high affinity (IC(50)&lt;100 nM). Is a selective, and slowly reversible antagonist of alpha-3/CHRNA3-containing and some alpha-4/CHRNA4-containing AChRs. In Bungarus candidus (Malayan krait), this protein is Kappa 1b-bungarotoxin.